Reading from the N-terminus, the 446-residue chain is Putative diacyglycerol O-acyltransferase Rv3371 (446 aa).

The active-site Proton acceptor is the His129. A disordered region spans residues 425–446; the sequence is SRALPSAARRGRPSVPTARARH.

Belongs to the long-chain O-acyltransferase family.

The enzyme catalyses an acyl-CoA + a 1,2-diacyl-sn-glycerol = a triacyl-sn-glycerol + CoA. It catalyses the reaction di-(9Z)-octadecenoylglycerol + (9Z)-octadecenoyl-CoA = 1,2,3-tri-(9Z-octadecenoyl)-glycerol + CoA. The protein operates within glycerolipid metabolism; triacylglycerol biosynthesis. Its function is as follows. Catalyzes the terminal and only committed step in triacylglycerol synthesis by using diacylglycerol and fatty acyl CoA as substrates. Required for storage lipid synthesis. In terms of biological role, upon expression in E.coli functions weakly as a triacylglycerol synthase, making triacylglycerol (TG) from diolein and long-chain fatty acyl-CoA. Has no wax synthase activity to produce wax esters. This chain is Putative diacyglycerol O-acyltransferase Rv3371, found in Mycobacterium tuberculosis (strain ATCC 25618 / H37Rv).